The chain runs to 158 residues: 2-C-methyl-D-erythritol 2,4-cyclodiphosphate synthase (158 aa).

A divalent metal cation is bound by residues D9 and H11. 4-CDP-2-C-methyl-D-erythritol 2-phosphate is bound by residues 9 to 11 (DVH) and 35 to 36 (HS). An a divalent metal cation-binding site is contributed by H43. Residues 57–59 (DIG), 62–66 (FPDTD), 133–136 (TTTE), F140, and R143 each bind 4-CDP-2-C-methyl-D-erythritol 2-phosphate.

The protein belongs to the IspF family. As to quaternary structure, homotrimer. The cofactor is a divalent metal cation.

The catalysed reaction is 4-CDP-2-C-methyl-D-erythritol 2-phosphate = 2-C-methyl-D-erythritol 2,4-cyclic diphosphate + CMP. Its pathway is isoprenoid biosynthesis; isopentenyl diphosphate biosynthesis via DXP pathway; isopentenyl diphosphate from 1-deoxy-D-xylulose 5-phosphate: step 4/6. In terms of biological role, involved in the biosynthesis of isopentenyl diphosphate (IPP) and dimethylallyl diphosphate (DMAPP), two major building blocks of isoprenoid compounds. Catalyzes the conversion of 4-diphosphocytidyl-2-C-methyl-D-erythritol 2-phosphate (CDP-ME2P) to 2-C-methyl-D-erythritol 2,4-cyclodiphosphate (ME-CPP) with a corresponding release of cytidine 5-monophosphate (CMP). The protein is 2-C-methyl-D-erythritol 2,4-cyclodiphosphate synthase of Actinobacillus pleuropneumoniae serotype 5b (strain L20).